The chain runs to 108 residues: Protein YcgL (108 aa).

In terms of domain architecture, YcgL spans 12-96 (MFCVIYRSSK…PPEDLLKQHL (85 aa)).

The chain is Protein YcgL from Escherichia coli (strain K12 / MC4100 / BW2952).